The primary structure comprises 266 residues: Thymidylate synthase (266 aa).

Residues Arg20 and 129–130 (RR) each bind dUMP. Catalysis depends on Cys149, which acts as the Nucleophile. DUMP is bound by residues 169–172 (RSCD), Asn180, and 210–212 (HVY). Asp172 contacts (6R)-5,10-methylene-5,6,7,8-tetrahydrofolate. Ala265 lines the (6R)-5,10-methylene-5,6,7,8-tetrahydrofolate pocket.

Belongs to the thymidylate synthase family. Bacterial-type ThyA subfamily. In terms of assembly, homodimer.

Its subcellular location is the cytoplasm. It carries out the reaction dUMP + (6R)-5,10-methylene-5,6,7,8-tetrahydrofolate = 7,8-dihydrofolate + dTMP. It participates in pyrimidine metabolism; dTTP biosynthesis. Catalyzes the reductive methylation of 2'-deoxyuridine-5'-monophosphate (dUMP) to 2'-deoxythymidine-5'-monophosphate (dTMP) while utilizing 5,10-methylenetetrahydrofolate (mTHF) as the methyl donor and reductant in the reaction, yielding dihydrofolate (DHF) as a by-product. This enzymatic reaction provides an intracellular de novo source of dTMP, an essential precursor for DNA biosynthesis. The chain is Thymidylate synthase from Bifidobacterium longum (strain NCC 2705).